A 188-amino-acid polypeptide reads, in one-letter code: ATP synthase subunit b 1 (188 aa).

Residues 35–55 (VHFGSHLFWLAISFGLFYLFI) traverse the membrane as a helical segment.

This sequence belongs to the ATPase B chain family. In terms of assembly, F-type ATPases have 2 components, F(1) - the catalytic core - and F(0) - the membrane proton channel. F(1) has five subunits: alpha(3), beta(3), gamma(1), delta(1), epsilon(1). F(0) has three main subunits: a(1), b(2) and c(10-14). The alpha and beta chains form an alternating ring which encloses part of the gamma chain. F(1) is attached to F(0) by a central stalk formed by the gamma and epsilon chains, while a peripheral stalk is formed by the delta and b chains.

The protein localises to the cell inner membrane. Its function is as follows. F(1)F(0) ATP synthase produces ATP from ADP in the presence of a proton or sodium gradient. F-type ATPases consist of two structural domains, F(1) containing the extramembraneous catalytic core and F(0) containing the membrane proton channel, linked together by a central stalk and a peripheral stalk. During catalysis, ATP synthesis in the catalytic domain of F(1) is coupled via a rotary mechanism of the central stalk subunits to proton translocation. Functionally, component of the F(0) channel, it forms part of the peripheral stalk, linking F(1) to F(0). The chain is ATP synthase subunit b 1 from Bartonella henselae (strain ATCC 49882 / DSM 28221 / CCUG 30454 / Houston 1) (Rochalimaea henselae).